The following is a 335-amino-acid chain: Methionine import ATP-binding protein MetN (335 aa).

The ABC transporter domain occupies 2–241 (IEFQRLHKSY…PKHVTTRRFV (240 aa)). Residue 38–45 (GHSGAGKS) coordinates ATP.

Belongs to the ABC transporter superfamily. Methionine importer (TC 3.A.1.24) family. In terms of assembly, the complex is composed of two ATP-binding proteins (MetN), two transmembrane proteins (MetI) and a solute-binding protein (MetQ).

Its subcellular location is the cell inner membrane. It catalyses the reaction L-methionine(out) + ATP + H2O = L-methionine(in) + ADP + phosphate + H(+). It carries out the reaction D-methionine(out) + ATP + H2O = D-methionine(in) + ADP + phosphate + H(+). Its function is as follows. Part of the ABC transporter complex MetNIQ involved in methionine import. Responsible for energy coupling to the transport system. This Xanthomonas oryzae pv. oryzae (strain KACC10331 / KXO85) protein is Methionine import ATP-binding protein MetN.